The sequence spans 259 residues: Tonin (259 aa).

The N-terminal stretch at M1–A18 is a signal peptide. Positions P19 to R24 are cleaved as a propeptide — activation peptide. The region spanning I25–K256 is the Peptidase S1 domain. Intrachain disulfides connect C31–C171, C48–C64, C150–C217, C182–C196, and C207–C232. The active-site Charge relay system is the H63. H63 contacts Zn(2+). A glycan (N-linked (GlcNAc...) asparagine) is linked at N106. Positions 113 and 115 each coordinate Zn(2+). The active-site Charge relay system is the D118. N-linked (GlcNAc...) asparagine glycosylation is present at N189. Catalysis depends on S211, which acts as the Charge relay system.

This sequence belongs to the peptidase S1 family. Kallikrein subfamily. In terms of assembly, monomer. Requires Zn(2+) as cofactor. As to expression, found in submaxillary gland.

The enzyme catalyses Preferential cleavage of Arg-|-Xaa bonds in small molecule substrates. Highly selective action to release kallidin (lysyl-bradykinin) from kininogen involves hydrolysis of Met-|-Xaa or Leu-|-Xaa.. This protein has both trypsin- and chymotrypsin-like activities, being able to release angiotensin II from angiotensin I or angiotensinogen. This Rattus norvegicus (Rat) protein is Tonin (Klk2).